Reading from the N-terminus, the 400-residue chain is Phosphoglycerate kinase (400 aa).

Residues 24–26 (DFN), Arg39, 62–65 (HLGK), Arg123, and Arg156 each bind substrate. Residues Lys207, Gly298, Glu329, and 356–359 (GGDS) each bind ATP.

It belongs to the phosphoglycerate kinase family. In terms of assembly, monomer.

The protein localises to the cytoplasm. The catalysed reaction is (2R)-3-phosphoglycerate + ATP = (2R)-3-phospho-glyceroyl phosphate + ADP. It participates in carbohydrate degradation; glycolysis; pyruvate from D-glyceraldehyde 3-phosphate: step 2/5. In Clostridioides difficile (strain 630) (Peptoclostridium difficile), this protein is Phosphoglycerate kinase.